The following is a 267-amino-acid chain: Large ribosomal subunit protein mL57 (267 aa).

Residues 43 to 54 are compositionally biased toward low complexity; the sequence is SSSAVQQEQDAS. Residues 43–73 form a disordered region; it reads SSSAVQQEQDASGTSSSQQPRPRWSYTPERM.

This sequence belongs to the ribonuclease III family. Mitochondrion-specific ribosomal protein mL57 subfamily. Component of the mitochondrial large ribosomal subunit (mt-LSU). Mature N.crassa 74S mitochondrial ribosomes consist of a small (37S) and a large (54S) subunit. The 37S small subunit contains a 16S ribosomal RNA (16S mt-rRNA) and 32 different proteins. The 54S large subunit contains a 23S rRNA (23S mt-rRNA) and 42 different proteins. mL57 forms a heterodimer with mL44 and stabilizes rRNA expansion segments 1/2 at a membrane-facing protuberance close to the point of attachment of the ribosome to the translocon in the membrane.

It localises to the mitochondrion. Its function is as follows. Component of the mitochondrial ribosome (mitoribosome), a dedicated translation machinery responsible for the synthesis of mitochondrial genome-encoded proteins, including at least some of the essential transmembrane subunits of the mitochondrial respiratory chain. The mitoribosomes are attached to the mitochondrial inner membrane and translation products are cotranslationally integrated into the membrane. This is Large ribosomal subunit protein mL57 (mrpl15) from Neurospora crassa (strain ATCC 24698 / 74-OR23-1A / CBS 708.71 / DSM 1257 / FGSC 987).